We begin with the raw amino-acid sequence, 120 residues long: Chaperonin GroEL (120 aa).

Residue D23–T27 coordinates ATP.

It belongs to the chaperonin (HSP60) family. As to quaternary structure, forms a cylinder of 14 subunits composed of two heptameric rings stacked back-to-back. Interacts with the co-chaperonin GroES.

The protein localises to the cytoplasm. The enzyme catalyses ATP + H2O + a folded polypeptide = ADP + phosphate + an unfolded polypeptide.. In terms of biological role, together with its co-chaperonin GroES, plays an essential role in assisting protein folding. The GroEL-GroES system forms a nano-cage that allows encapsulation of the non-native substrate proteins and provides a physical environment optimized to promote and accelerate protein folding. In Mycolicibacterium chitae (Mycobacterium chitae), this protein is Chaperonin GroEL.